A 134-amino-acid polypeptide reads, in one-letter code: MAISLKVLAPNQNVYEGDAEEVILPSTTGQIGVLPGHISLVTAIDIGVLRLRMNSKWTSIALMGGFAEIESDEVIVLVNSAEIGSEINTQNAEEALKKAKSAISKFPENEKSPEKIKALNEISKAEARFQASKN.

The protein belongs to the ATPase epsilon chain family. F-type ATPases have 2 components, CF(1) - the catalytic core - and CF(0) - the membrane proton channel. CF(1) has five subunits: alpha(3), beta(3), gamma(1), delta(1), epsilon(1). CF(0) has three main subunits: a, b and c.

The protein localises to the cellular thylakoid membrane. Its function is as follows. Produces ATP from ADP in the presence of a proton gradient across the membrane. This chain is ATP synthase epsilon chain, found in Prochlorococcus marinus (strain MIT 9515).